Here is a 376-residue protein sequence, read N- to C-terminus: MAADYYQLLGVARDADKDEIKRAYRRLARKYHPDVNKEPGAEDKFKEINRAYEVLSEPETRARYDQFGEAGVSGAGAAGFQDFGDMGGFADIFETFFSGFGGMGGQQASARRRGPTRGEDLRLDLKLDFRDAIFGGEKEIRVTHEETCGTCQGSGAKAGTRPQTCTTCGGAGQVRRATRTPFGSFTQVSVCPTCEGSGQMIVDKCDDCGGAGRLRRPKKLKINIPAGVDSGTRLRVANEGDAGLRGGPPGDLYVYLFVSEDTQFRREGINLFSTVTISYLQAILGCSLEVATVDGPTELIIPPGTQPNAVLTVEGKGVPRLGNPVARGNLLVTIKVEIPTKISAEERELLEKVVQIRGDRAGKGGIEGFFKGVFGG.

One can recognise a J domain in the interval 4–68; sequence DYYQLLGVAR…ETRARYDQFG (65 aa). The CR-type zinc finger occupies 135–217; sequence GGEKEIRVTH…CGGAGRLRRP (83 aa). C148, C151, C165, C168, C191, C194, C205, and C208 together coordinate Zn(2+). 4 CXXCXGXG motif repeats span residues 148-155, 165-172, 191-198, and 205-212; these read CGTCQGSG, CTTCGGAG, CPTCEGSG, and CDDCGGAG.

The protein belongs to the DnaJ family. Homodimer. Zn(2+) serves as cofactor.

It localises to the cytoplasm. Participates actively in the response to hyperosmotic and heat shock by preventing the aggregation of stress-denatured proteins and by disaggregating proteins, also in an autonomous, DnaK-independent fashion. Unfolded proteins bind initially to DnaJ; upon interaction with the DnaJ-bound protein, DnaK hydrolyzes its bound ATP, resulting in the formation of a stable complex. GrpE releases ADP from DnaK; ATP binding to DnaK triggers the release of the substrate protein, thus completing the reaction cycle. Several rounds of ATP-dependent interactions between DnaJ, DnaK and GrpE are required for fully efficient folding. Also involved, together with DnaK and GrpE, in the DNA replication of plasmids through activation of initiation proteins. The polypeptide is Chaperone protein DnaJ (Synechococcus sp. (strain ATCC 27144 / PCC 6301 / SAUG 1402/1) (Anacystis nidulans)).